A 169-amino-acid chain; its full sequence is MAANGSNVVSRGAVRFTEEQEALVLKSWAIMKNDSAHIGHRFFLKIFEVAPSARQLFSFLRNSDVPLEKNPKLKIHAMAVFVMTCEAAAQLRKTGRVTVRDTTIKRLGSTHFKNGVSDAHFEVAKFALLETIKEAVPASMWSPAMKGAWGEAYDHLVAAIKQGMKPAAA.

The Globin domain occupies 15 to 165 (RFTEEQEALV…LVAAIKQGMK (151 aa)). The Homodimerization signature appears at 48-52 (EVAPS). 6 residues coordinate heme b: S58, K72, H76, R106, T110, and H111. The Homodimerization signature appears at 118 to 130 (DAHFEVAKFALLE).

This sequence belongs to the plant globin family. As to quaternary structure, homodimer. It depends on heme b as a cofactor.

The protein resides in the cytoplasm. The protein localises to the nucleus. It catalyses the reaction Fe(III)-heme b-[protein] + nitric oxide + H2O = Fe(II)-heme b-[protein] + nitrite + 2 H(+). In terms of biological role, phytoglobin that reduces nitrite to nitric oxide under anoxic conditions (e.g. during flooding or in waterlogged soil). May not function as an oxygen storage or transport protein. Has an unusually high affinity for O(2) through an hexacoordinate heme iron because of a very low dissociation constant. The protein is Anaerobic nitrite reductase NSHB3 of Oryza sativa subsp. indica (Rice).